The following is a 158-amino-acid chain: Lipoprotein signal peptidase (158 aa).

Transmembrane regions (helical) follow at residues 7-27 (LFWI…YWVV), 38-58 (LLTG…FSLL), 68-88 (LSLG…TLNL), and 92-112 (LGYG…FVLG). Residues D116 and D132 contribute to the active site. A helical transmembrane segment spans residues 125–145 (FPVFNVADSFISIGIVFLLIA).

It belongs to the peptidase A8 family.

It is found in the cell inner membrane. It carries out the reaction Release of signal peptides from bacterial membrane prolipoproteins. Hydrolyzes -Xaa-Yaa-Zaa-|-(S,diacylglyceryl)Cys-, in which Xaa is hydrophobic (preferably Leu), and Yaa (Ala or Ser) and Zaa (Gly or Ala) have small, neutral side chains.. It functions in the pathway protein modification; lipoprotein biosynthesis (signal peptide cleavage). Functionally, this protein specifically catalyzes the removal of signal peptides from prolipoproteins. The protein is Lipoprotein signal peptidase of Nostoc punctiforme (strain ATCC 29133 / PCC 73102).